We begin with the raw amino-acid sequence, 248 residues long: Probable phosphatase Sfri_3709 (248 aa).

The Zn(2+) site is built by His8, His10, His16, His41, Glu74, His102, His132, Asp193, and His195.

The protein belongs to the PHP family. The cofactor is Zn(2+).

The chain is Probable phosphatase Sfri_3709 from Shewanella frigidimarina (strain NCIMB 400).